The following is a 429-amino-acid chain: Glutamyl-tRNA reductase (429 aa).

Substrate is bound by residues 49-52, Ser-108, 113-115, and Gln-119; these read TCNR and EAQ. Residue Cys-50 is the Nucleophile of the active site. 188-193 serves as a coordination point for NADP(+); that stretch reads GAGEMS.

It belongs to the glutamyl-tRNA reductase family. In terms of assembly, homodimer.

The catalysed reaction is (S)-4-amino-5-oxopentanoate + tRNA(Glu) + NADP(+) = L-glutamyl-tRNA(Glu) + NADPH + H(+). The protein operates within porphyrin-containing compound metabolism; protoporphyrin-IX biosynthesis; 5-aminolevulinate from L-glutamyl-tRNA(Glu): step 1/2. Catalyzes the NADPH-dependent reduction of glutamyl-tRNA(Glu) to glutamate 1-semialdehyde (GSA). This is Glutamyl-tRNA reductase from Rubrobacter xylanophilus (strain DSM 9941 / JCM 11954 / NBRC 16129 / PRD-1).